The primary structure comprises 606 residues: Ectonucleoside triphosphate diphosphohydrolase 7 (606 aa).

Over 1–28 (MARISFSYLCPASWYFTVPTVSPFLRQR) the chain is Cytoplasmic. The chain crosses the membrane as a helical span at residues 29-49 (VAFLGLFFIPCVLLLLLIMDL). Over 50-548 (RHWATSLPRD…PAHGSWLRLS (499 aa)) the chain is Vesicular. The Proton acceptor role is filled by Glu217. A glycan (N-linked (GlcNAc...) asparagine) is linked at Asn330. Residues Cys448 and Cys477 are joined by a disulfide bond. Residues 549-569 (FVYNHYLFFACTLVVLLAIVL) form a helical membrane-spanning segment. Topologically, residues 570–606 (YLLRIHRIHRRQTRASAPLDLLWIEQVVPMIGVQVGP) are cytoplasmic.

Belongs to the GDA1/CD39 NTPase family. The cofactor is Ca(2+). Mg(2+) serves as cofactor. In terms of tissue distribution, widely expressed. Expressed at high level in brain, kidney, liver, testis and small intestin. Weakly expressed in lung, thymus and heart.

The protein resides in the cytoplasmic vesicle membrane. The catalysed reaction is a ribonucleoside 5'-triphosphate + H2O = a ribonucleoside 5'-diphosphate + phosphate + H(+). It carries out the reaction UTP + H2O = UDP + phosphate + H(+). It catalyses the reaction GTP + H2O = GDP + phosphate + H(+). The enzyme catalyses CTP + H2O = CDP + phosphate + H(+). The catalysed reaction is ATP + H2O = ADP + phosphate + H(+). Catalyzes the hydrolysis of nucleoside triphosphates and diphosphates in a calcium- or magnesium-dependent manner. Preferentially hydrolyzes nucleoside 5'-triphosphates, with substrate preference for UTP &gt; GTP &gt; CTP. Hydrolyzes nucleoside diphosphates only to a minor extent. In contrast to its human ortholog is able to hydrolyze ATP. In the epithelial cells of small intestine controls luminal ATP levels, therefore regulating Th17-cell development. This chain is Ectonucleoside triphosphate diphosphohydrolase 7 (Entpd7), found in Mus musculus (Mouse).